A 616-amino-acid polypeptide reads, in one-letter code: Chaperone protein HscA homolog (616 aa).

The protein belongs to the heat shock protein 70 family.

Its function is as follows. Chaperone involved in the maturation of iron-sulfur cluster-containing proteins. Has a low intrinsic ATPase activity which is markedly stimulated by HscB. The chain is Chaperone protein HscA homolog from Tolumonas auensis (strain DSM 9187 / NBRC 110442 / TA 4).